The chain runs to 230 residues: Cytidylate kinase (230 aa).

12–20 contributes to the ATP binding site; the sequence is GPSGTGKST.

It belongs to the cytidylate kinase family. Type 1 subfamily.

The protein localises to the cytoplasm. The catalysed reaction is CMP + ATP = CDP + ADP. It catalyses the reaction dCMP + ATP = dCDP + ADP. This is Cytidylate kinase from Corynebacterium efficiens (strain DSM 44549 / YS-314 / AJ 12310 / JCM 11189 / NBRC 100395).